The chain runs to 465 residues: Type II restriction enzyme BsuMI component YdjA (465 aa).

BsuMI restriction activity requires YdiR, YdiS and YdjA.

It catalyses the reaction Endonucleolytic cleavage of DNA to give specific double-stranded fragments with terminal 5'-phosphates.. Its function is as follows. A P subtype restriction enzyme that recognizes the double-stranded sequence 5'-CTCGAG-3'; the cleavage site is unknown. The protein is Type II restriction enzyme BsuMI component YdjA (ydjA) of Bacillus subtilis (strain 168).